The following is a 745-amino-acid chain: MSQVPTTYSFDAPTDFINFSSLDAEEDTENIDSWFDEKANLENKFLRQRGIGEPFQGKNSLRKAKLQQGFVTPLKAVDNTYHKETEKENLQKQSIPSNDCSSLDAKRAVSGNTPVQPQRRSIRLSAQKDLEQKEKNHVASVEMKAKRCVAPATDCPPQKRMKVSHKKKLEEEEEGSAPATSRKNERETLEKAKGKHTVPGVPPAREKVLKSTEEQEIEKRLRMQQEVVELRRKNEEFKKLALAGPGQPVKKSTSQVTKTVDFHFLTDERIKQHPKNQEEYKEVNFMSELRKHSSTPARGTRGCTIIKPFNLSKGKKRTFDEAASTYVPIAQQVEAFHKRTPNRYHLRNKKDESLLPSKSVNKIARDPQTPILQTKYRTRAVTCKSTAEQEAEELEKLQQYKFKARELDPRIFESGPILPKRAPVKPPTQPVGFDLEIEKRIHERESKKKTEDEQFEFHSRPCPTKILEDVVGVPEKKVIPATVPKSPVFALKNRIRVPIKDEEEEKPVVIKAQPVPHYGVPYKPHIAEARNVEVCPFSFDTRDKERQLQKEKKIKEMQKGEVPKFKALPVPHFDTINLPEKKVKNVTQAEPFSLETDKRGAYKAEMWKHQLEEEQKQQKDAACFKARPNTVIFQEPFVPKKEKKSLAENPSGSLVQEPFQLATERRAKERQELEKKMAEVEAWKLQQLEEVRQQEEEQQKEELARLRKELVHKANPIRKYAAVEVKSSELPLTVPVSPKFSTRFQ.

Residue Thr72 is modified to Phosphothreonine. Positions 84 to 217 (ETEKENLQKQ…VLKSTEEQEI (134 aa)) are disordered. 2 stretches are compositionally biased toward polar residues: residues 91–101 (QKQSIPSNDCS) and 110–119 (SGNTPVQPQR). A phosphoserine mark is found at Ser121 and Ser125. Composition is skewed to basic and acidic residues over residues 126–137 (AQKDLEQKEKNH), 182–192 (RKNERETLEKA), and 204–217 (AREK…EQEI). Lys128 bears the N6-acetyllysine mark. Residue Ser294 is modified to Phosphoserine. The residue at position 307 (Lys307) is an N6-acetyllysine. The residue at position 312 (Ser312) is a Phosphoserine. At Thr340 the chain carries Phosphothreonine. Residue Ser359 is modified to Phosphoserine. Position 369 is a phosphothreonine (Thr369). Position 375 is an N6-acetyllysine (Lys375). Residue Lys477 forms a Glycyl lysine isopeptide (Lys-Gly) (interchain with G-Cter in SUMO2) linkage. Ser486 carries the phosphoserine modification. Residues Lys500 and Lys640 each participate in a glycyl lysine isopeptide (Lys-Gly) (interchain with G-Cter in SUMO2) cross-link. Ser737 is modified (phosphoserine). Lys739 is covalently cross-linked (Glycyl lysine isopeptide (Lys-Gly) (interchain with G-Cter in SUMO2)).

It belongs to the TPX2 family. In terms of assembly, interacts with AURKA. Interacts with importin-alpha; leading to inactivate TPX2. Interacts with HNRNPU; this interaction recruits HNRNPU to spindle microtubules (MTs). Interacts with BCL2L10. Interacts with KIF11.

It localises to the nucleus. It is found in the cytoplasm. The protein resides in the cytoskeleton. Its subcellular location is the spindle. The protein localises to the spindle pole. Functionally, spindle assembly factor required for normal assembly of mitotic spindles. Required for normal assembly of microtubules during apoptosis. Required for chromatin and/or kinetochore dependent microtubule nucleation. Mediates AURKA localization to spindle microtubules. Activates AURKA by promoting its autophosphorylation at 'Thr-288' and protects this residue against dephosphorylation. TPX2 is inactivated upon binding to importin-alpha. At the onset of mitosis, GOLGA2 interacts with importin-alpha, liberating TPX2 from importin-alpha, allowing TPX2 to activate AURKA kinase and stimulate local microtubule nucleation. The sequence is that of Targeting protein for Xklp2 (Tpx2) from Mus musculus (Mouse).